The chain runs to 157 residues: Myosin regulatory light chain, striated adductor muscle (157 aa).

2 consecutive EF-hand domains span residues 16–51 (KQIQ…LGRA) and 85–120 (DSEE…MGDN). Asp-29, Asp-31, Asp-33, and Asp-40 together coordinate Ca(2+).

Its function is as follows. In molluscan muscle, calcium regulation is associated with myosin rather than with actin. Muscle myosin contains two types of light chains: the catalytic light chain, essential for ATPase activity, and the regulatory light chain, a calcium-binding protein responsible for Ca(2+) dependent binding and Ca(2+) dependent Mg-ATPase activity. This chain is Myosin regulatory light chain, striated adductor muscle, found in Argopecten irradians (Bay scallop).